The primary structure comprises 57 residues: Conotoxin Cal6.34 (57 aa).

The N-terminal stretch at 1–22 (MKLTCVLIVAVLILTACQVIAA) is a signal peptide. 3 cysteine pairs are disulfide-bonded: Cys26–Cys37, Cys29–Cys43, and Cys36–Cys54.

The protein belongs to the conotoxin O1 superfamily. Expressed by the venom duct.

The protein localises to the secreted. Its function is as follows. Probable neurotoxin. The polypeptide is Conotoxin Cal6.34 (Californiconus californicus (California cone)).